The following is a 63-amino-acid chain: Beta-defensin 5 (63 aa).

The N-terminal stretch at 1–22 (MRIHYLLFSFLLVLLSPLSVFT) is a signal peptide. At Gln-23 the chain carries Pyrrolidone carboxylic acid. 3 cysteine pairs are disulfide-bonded: Cys-31-Cys-59, Cys-38-Cys-52, and Cys-42-Cys-60.

Belongs to the beta-defensin family.

The protein localises to the secreted. In terms of biological role, has antibacterial activity. This Rattus norvegicus (Rat) protein is Beta-defensin 5 (Defb5).